We begin with the raw amino-acid sequence, 413 residues long: MVSAKDILSDSLRSSVLIIKHKDKLSPDYVPENLPHREEKIKELGFIFKDLLAGDAKDSERVVILGRTGTGKTATVRLFGKNFEDIAEREYGVKVKYVHINCYRHRTLYLISQEIANALKLPIPSRGLSAQEVFKMIHEYLDRRNIHLIVALDEFGHFLNTANTEEIYFLVRLYDEISAIIKRISYIFIVNESHSIYKLDRSIRDHIARRLIEFPPYKSMELYDILKYRVDEAFNDNAVDDEVLQFISNTYGYDKGGNGNARIAIETLSLAGEIAEKEGSPVVLLDHAKKANSTINPEIQEIIDSLSYLDLHQLILLKALIRALNKTKADEITMGTLEEEYISLSREFNEEPRRHTQVYEYLRKLKVIGIINTRQSGKGMRGRTTLVSLSLPLDKRLDDYIMQQIMVRLKSRA.

Residues Thr70 to Ala74, Tyr217, and Arg229 each bind ATP.

Belongs to the CDC6/cdc18 family. As to quaternary structure, monomer. Interacts with Cdc6-3, MCM and PolB1. Autophosphorylated in vitro.

In terms of biological role, involved in regulation of DNA replication. May play essential roles in origin recognition and cell cycle control of replication. Binds both single-stranded and double-stranded DNA, with a preference for molecules that contain a bubble, a fork, or a tail. Has a weak ATPase activity. Stimulates the binding of the MCM helicase to the origin DNA, but strongly inhibits ATPase and DNA helicase activities of MCM. Also regulates the DNA polymerase and the nuclease activities of PolB1. The protein is ORC1-type DNA replication protein 2 (cdc6-2) of Saccharolobus solfataricus (strain ATCC 35092 / DSM 1617 / JCM 11322 / P2) (Sulfolobus solfataricus).